The primary structure comprises 271 residues: Dihydropteroate synthase type-2 (271 aa).

Residues 1 to 259 form the Pterin-binding domain; the sequence is MNKSLIIFGI…EPRPLRDGLA (259 aa). Asparagine 12 serves as a coordination point for 4-aminobenzoate. Diphosphate is bound by residues asparagine 12, phenylalanine 18, serine 51, and serine 52. Asparagine 12 contacts Mg(2+). 7 residues coordinate 7,8-dihydropteroate: serine 52, aspartate 85, asparagine 104, aspartate 174, phenylalanine 179, lysine 213, and serine 214. Positions 85, 104, and 174 each coordinate (7,8-dihydropterin-6-yl)methyl diphosphate. 2 residues coordinate 6-hydroxymethyl-7,8-dihydropterin: asparagine 104 and aspartate 174. Residue lysine 213 participates in (7,8-dihydropterin-6-yl)methyl diphosphate binding. Lysine 213 contributes to the 6-hydroxymethyl-7,8-dihydropterin binding site. Residue arginine 247 participates in 4-aminobenzoate binding. Residues arginine 247 and histidine 249 each contribute to the diphosphate site. Residue 247-249 participates in (7,8-dihydropterin-6-yl)methyl diphosphate binding; sequence RTH.

This sequence belongs to the DHPS family. As to quaternary structure, homodimer. Mg(2+) is required as a cofactor.

The enzyme catalyses (7,8-dihydropterin-6-yl)methyl diphosphate + 4-aminobenzoate = 7,8-dihydropteroate + diphosphate. Its pathway is cofactor biosynthesis; tetrahydrofolate biosynthesis; 7,8-dihydrofolate from 2-amino-4-hydroxy-6-hydroxymethyl-7,8-dihydropteridine diphosphate and 4-aminobenzoate: step 1/2. In terms of biological role, catalyzes the condensation of para-aminobenzoate (pABA) with 6-hydroxymethyl-7,8-dihydropterin diphosphate (DHPt-PP) to form 7,8-dihydropteroate (H2Pte), the immediate precursor of folate derivatives. Confers resistance to sulfonamide antibiotics, including sulfamethoxazole (SMX), sulfadiazine and sulfisoxazole. The type II enzyme is stable whereas type I DHPS loses its activity rapidly. The polypeptide is Dihydropteroate synthase type-2 (Escherichia coli).